The sequence spans 239 residues: Probable transcriptional regulatory protein BCAH187_A0615 (239 aa).

The protein belongs to the TACO1 family. YeeN subfamily.

The protein resides in the cytoplasm. This chain is Probable transcriptional regulatory protein BCAH187_A0615, found in Bacillus cereus (strain AH187).